Here is a 697-residue protein sequence, read N- to C-terminus: Elongation factor G (697 aa).

Residues 8-282 enclose the tr-type G domain; sequence EDYRNIGIMA…AVVDYLPSPL (275 aa). Residues 17–24, 81–85, and 135–138 each bind GTP; these read AHIDAGKT, DTPGH, and NKMD.

Belongs to the TRAFAC class translation factor GTPase superfamily. Classic translation factor GTPase family. EF-G/EF-2 subfamily.

The protein localises to the cytoplasm. Catalyzes the GTP-dependent ribosomal translocation step during translation elongation. During this step, the ribosome changes from the pre-translocational (PRE) to the post-translocational (POST) state as the newly formed A-site-bound peptidyl-tRNA and P-site-bound deacylated tRNA move to the P and E sites, respectively. Catalyzes the coordinated movement of the two tRNA molecules, the mRNA and conformational changes in the ribosome. The polypeptide is Elongation factor G (Mycoplasmopsis agalactiae (strain NCTC 10123 / CIP 59.7 / PG2) (Mycoplasma agalactiae)).